The following is a 187-amino-acid chain: Protein TfaD (187 aa).

In the C-terminal section; belongs to the tfa family.

The protein is Protein TfaD (tfaD) of Escherichia coli (strain K12).